Consider the following 500-residue polypeptide: L-arabinose isomerase (500 aa).

Mn(2+)-binding residues include E306, E333, H350, and H450.

Belongs to the arabinose isomerase family. Homohexamer. Mn(2+) serves as cofactor.

It catalyses the reaction beta-L-arabinopyranose = L-ribulose. It functions in the pathway carbohydrate degradation; L-arabinose degradation via L-ribulose; D-xylulose 5-phosphate from L-arabinose (bacterial route): step 1/3. Its function is as follows. Catalyzes the conversion of L-arabinose to L-ribulose. The sequence is that of L-arabinose isomerase from Escherichia coli O139:H28 (strain E24377A / ETEC).